The primary structure comprises 276 residues: Small ribosomal subunit protein uS3 (276 aa).

Residues 39–110 (IRRETMKFLK…KINIKIKEIK (72 aa)) enclose the KH type-2 domain.

Belongs to the universal ribosomal protein uS3 family. Part of the 30S ribosomal subunit. Forms a tight complex with proteins S10 and S14.

In terms of biological role, binds the lower part of the 30S subunit head. Binds mRNA in the 70S ribosome, positioning it for translation. The sequence is that of Small ribosomal subunit protein uS3 from Borrelia turicatae (strain 91E135).